A 273-amino-acid chain; its full sequence is DnaJ homolog subfamily C member 27 (273 aa).

Residues 1–18 (MESNVPKRKEPLKSLRIK) form a required for interaction with MAPK1 region. GTP is bound by residues 23 to 30 (GNAEVGKS), 71 to 75 (DMAGH), and 134 to 137 (NKID). The 57-residue stretch at 217 to 273 (DSWEMLGVRPGASREEVNKAYRKLAVLLHPDKCVAPGSEDAFKAVVNARTALLKNIK) folds into the J domain.

This sequence belongs to the small GTPase superfamily. Rab family. In terms of assembly, interacts directly with MAPK1 (wild-type and kinase-deficient forms). Interacts directly (in GTP-bound form) with MAP2K1 (wild-type and kinase-deficient forms).

The protein localises to the nucleus. Its function is as follows. GTPase which can activate the MEK/ERK pathway and induce cell transformation when overexpressed. May act as a nuclear scaffold for MAPK1, probably by association with MAPK1 nuclear export signal leading to enhanced ERK1/ERK2 signaling. This is DnaJ homolog subfamily C member 27 (Dnajc27) from Rattus norvegicus (Rat).